We begin with the raw amino-acid sequence, 351 residues long: Type II restriction enzyme NmeDI (351 aa).

The enzyme catalyses Endonucleolytic cleavage of DNA to give specific double-stranded fragments with terminal 5'-phosphates.. A P subtype restriction enzyme that recognizes the double-stranded sequence 5'-N(12)RCCGGYN(12)-3' and cleaves on both sides of the recognition sequence. The polypeptide is Type II restriction enzyme NmeDI (nmeDIRP) (Neisseria meningitidis serogroup C).